The following is a 347-amino-acid chain: Dolichyl-diphosphooligosaccharide--protein glycosyltransferase subunit TUSC3 (347 aa).

Positions 1–41 (MSARAAPSRRRQAGRRLRYLPTGSFPFLLLLLLLCIQLGGG) are cleaved as a signal peptide. The Lumenal segment spans residues 42–196 (QKKKENLLAE…DVHIRVFRPP (155 aa)). In terms of domain architecture, Thioredoxin spans 59-187 (WSSRRSIFRM…LAKWIADRTD (129 aa)). N-linked (GlcNAc...) asparagine glycosylation is present at Asn83. Cys99 and Cys102 form a disulfide bridge. The helical transmembrane segment at 197–217 (NYSGTIALALLVSLVGGLLYL) threads the bilayer. The Cytoplasmic segment spans residues 218-221 (RRNN). A helical membrane pass occupies residues 222–242 (LEFIYNKTGWAMVSLCIVFAM). Residues 243–276 (TSGQMWNHIRGPPYAHKNPHNGQVSYIHGSSQAQ) are Lumenal-facing. A helical membrane pass occupies residues 277–297 (FVAESHIILVLNAAITMGMVL). At 298–312 (LNEAATSKGDVGKRR) the chain is on the cytoplasmic side. A helical membrane pass occupies residues 313 to 333 (IICLVGLGLVVFFFSFLLSIF). Residues 334-347 (RSKYHGYPYSFLIK) lie on the Lumenal side of the membrane.

Belongs to the OST3/OST6 family. In terms of assembly, accessory component of the STT3B-containing form of the oligosaccharyltransferase (OST) complex. OST exists in two different complex forms which contain common core subunits RPN1, RPN2, OST48, OST4, DAD1 and TMEM258, either STT3A or STT3B as catalytic subunits, and form-specific accessory subunits. OST can form stable complexes with the Sec61 complex or with both the Sec61 and TRAP complexes. The association of TUSC3 or MAGT1 with the STT3B-containing complex seems to be mutually exclusvice.

The protein localises to the endoplasmic reticulum membrane. Its pathway is protein modification; protein glycosylation. Functionally, acts as accessory component of the N-oligosaccharyl transferase (OST) complex which catalyzes the transfer of a high mannose oligosaccharide from a lipid-linked oligosaccharide donor to an asparagine residue within an Asn-X-Ser/Thr consensus motif in nascent polypeptide chains. Involved in N-glycosylation of STT3B-dependent substrates. Specifically required for the glycosylation of a subset of acceptor sites that are near cysteine residues; in this function seems to act redundantly with MAGT1. In its oxidized form proposed to form transient mixed disulfides with a glycoprotein substrate to facilitate access of STT3B to the unmodified acceptor site. Also has oxidoreductase-independent functions in the STT3B-containing OST complex possibly involving substrate recognition. Could indirectly play a role in Mg(2+) transport. This Mus musculus (Mouse) protein is Dolichyl-diphosphooligosaccharide--protein glycosyltransferase subunit TUSC3 (Tusc3).